Here is a 408-residue protein sequence, read N- to C-terminus: MMSISEATVDSMIKDLPLPSNILKTLRDDVIKAGVSKKEMEEIIERVMEEYTVSCIEPCDAAGVVAAQSIGEPGTQMTMRTFHYAGVAEINVTLGLPRLIEIVDARKIPSTPMMTIALSKEHPEDYAYDREKTRALAWEIEATKIDHIADVTTDLSQMKLIIDLHEKAMEGRNITIDRVKEKFNEELNVLVSISPDIDNQIVITPGEPSYRELLQLAKSIHNVTLKGIEGIKRVVVRKEGEEYTLYTEGSALREVLQFEGVDRTRTSTNNINEIYEVLGIEAARNAIIKEATDTLREQGLTVDIRHIMLVADLMTSDGEVKQIGRHGISGEKASVFARAAFEVTVNHLLDAGMRGYVDQLQGVTENIIVGQPIRMGTGDVHLISRKAEKVVEVPPEIETAEEIEVEEG.

It belongs to the RNA polymerase beta' chain family. As to quaternary structure, part of the RNA polymerase complex.

Its subcellular location is the cytoplasm. The catalysed reaction is RNA(n) + a ribonucleoside 5'-triphosphate = RNA(n+1) + diphosphate. Functionally, DNA-dependent RNA polymerase (RNAP) catalyzes the transcription of DNA into RNA using the four ribonucleoside triphosphates as substrates. Forms part of the jaw domain. This is DNA-directed RNA polymerase subunit Rpo1C from Methanosarcina mazei (strain ATCC BAA-159 / DSM 3647 / Goe1 / Go1 / JCM 11833 / OCM 88) (Methanosarcina frisia).